A 604-amino-acid chain; its full sequence is Glutamine--fructose-6-phosphate aminotransferase [isomerizing] (604 aa).

Cysteine 2 functions as the Nucleophile; for GATase activity in the catalytic mechanism. Residues 2-218 enclose the Glutamine amidotransferase type-2 domain; that stretch reads CGIVGVVGNR…DKELVILTKD (217 aa). SIS domains follow at residues 284-423 and 452-594; these read IITS…ANGK and VAEK…VDKP. Lysine 599 acts as the For Fru-6P isomerization activity in catalysis.

As to quaternary structure, homodimer.

It localises to the cytoplasm. The enzyme catalyses D-fructose 6-phosphate + L-glutamine = D-glucosamine 6-phosphate + L-glutamate. Its function is as follows. Catalyzes the first step in hexosamine metabolism, converting fructose-6P into glucosamine-6P using glutamine as a nitrogen source. This chain is Glutamine--fructose-6-phosphate aminotransferase [isomerizing], found in Streptococcus pyogenes serotype M3 (strain ATCC BAA-595 / MGAS315).